A 328-amino-acid polypeptide reads, in one-letter code: Tetraacyldisaccharide 4'-kinase (328 aa).

ATP is bound at residue 55–62; it reads TAGGNGKT.

It belongs to the LpxK family.

The enzyme catalyses a lipid A disaccharide + ATP = a lipid IVA + ADP + H(+). It functions in the pathway glycolipid biosynthesis; lipid IV(A) biosynthesis; lipid IV(A) from (3R)-3-hydroxytetradecanoyl-[acyl-carrier-protein] and UDP-N-acetyl-alpha-D-glucosamine: step 6/6. Functionally, transfers the gamma-phosphate of ATP to the 4'-position of a tetraacyldisaccharide 1-phosphate intermediate (termed DS-1-P) to form tetraacyldisaccharide 1,4'-bis-phosphate (lipid IVA). This chain is Tetraacyldisaccharide 4'-kinase, found in Escherichia coli O17:K52:H18 (strain UMN026 / ExPEC).